The chain runs to 367 residues: Alginate lyase (367 aa).

Residues 1-24 (MTAFKRIFSPALLVLALYGGAAHA) form the signal peptide. Residues 63 to 64 (SK), 136 to 137 (HT), and Y254 contribute to the substrate site.

Belongs to the polysaccharide lyase 5 family.

The protein localises to the periplasm. The enzyme catalyses Eliminative cleavage of alginate to give oligosaccharides with 4-deoxy-alpha-L-erythro-hex-4-enuronosyl groups at their non-reducing ends and beta-D-mannuronate at their reducing end.. Catalyzes the depolymerization of alginate by cleaving the beta-1,4 glycosidic bond between two adjacent sugar residues via a beta-elimination mechanism. May serve to degrade mislocalized alginate that is trapped in the periplasmic space. In Pseudomonas putida (strain W619), this protein is Alginate lyase.